Consider the following 340-residue polypeptide: S-adenosylmethionine:tRNA ribosyltransferase-isomerase (340 aa).

This sequence belongs to the QueA family. In terms of assembly, monomer.

It localises to the cytoplasm. The enzyme catalyses 7-aminomethyl-7-carbaguanosine(34) in tRNA + S-adenosyl-L-methionine = epoxyqueuosine(34) in tRNA + adenine + L-methionine + 2 H(+). It functions in the pathway tRNA modification; tRNA-queuosine biosynthesis. Functionally, transfers and isomerizes the ribose moiety from AdoMet to the 7-aminomethyl group of 7-deazaguanine (preQ1-tRNA) to give epoxyqueuosine (oQ-tRNA). This chain is S-adenosylmethionine:tRNA ribosyltransferase-isomerase, found in Chromobacterium violaceum (strain ATCC 12472 / DSM 30191 / JCM 1249 / CCUG 213 / NBRC 12614 / NCIMB 9131 / NCTC 9757 / MK).